We begin with the raw amino-acid sequence, 499 residues long: Bifunctional purine biosynthesis protein PurH (499 aa).

The region spanning 1–144 is the MGS-like domain; that stretch reads MIKRALISVF…KNFKDVVVLT (144 aa).

This sequence belongs to the PurH family.

It carries out the reaction (6R)-10-formyltetrahydrofolate + 5-amino-1-(5-phospho-beta-D-ribosyl)imidazole-4-carboxamide = 5-formamido-1-(5-phospho-D-ribosyl)imidazole-4-carboxamide + (6S)-5,6,7,8-tetrahydrofolate. The catalysed reaction is IMP + H2O = 5-formamido-1-(5-phospho-D-ribosyl)imidazole-4-carboxamide. It participates in purine metabolism; IMP biosynthesis via de novo pathway; 5-formamido-1-(5-phospho-D-ribosyl)imidazole-4-carboxamide from 5-amino-1-(5-phospho-D-ribosyl)imidazole-4-carboxamide (10-formyl THF route): step 1/1. It functions in the pathway purine metabolism; IMP biosynthesis via de novo pathway; IMP from 5-formamido-1-(5-phospho-D-ribosyl)imidazole-4-carboxamide: step 1/1. The chain is Bifunctional purine biosynthesis protein PurH from Clostridium botulinum (strain Hall / ATCC 3502 / NCTC 13319 / Type A).